We begin with the raw amino-acid sequence, 731 residues long: MSRSEKLTGEHLAPEPAEMARLVAGTHHNPHGILGAHEYDDHTVIRAFRPHAVEVVALVGKDRFSLQHLDSGLFAVALPFVDLIDYRLQVTYEGCEPHTVADAYRFLPTLGEVDLHLFAEGRHERLWEVLGAHPRSFTTADGVVSGVSFAVWAPNAKGVSLIGEFNGWNGHEAPMRVLGPSGVWELFWPDFPCDGLYKFRVHGADGVVTDRADPFAFGTEVPPQTASRVTSSDYTWGDDDWMAGRALRNPVNEAMSTYEVHLGSWRPGLSYRQLARELTDYIVDQGFTHVELLPVAEHPFAGSWGYQVTSYYAPTSRFGTPDDFRALVDALHQAGIGVIVDWVPAHFPKDAWALGRFDGTPLYEHSDPKRGEQLDWGTYVFDFGRPEVRNFLVANALYWLQEFHIDGLRVDAVASMLYLDYSRPEGGWTPNVHGGRENLEAVQFLQEMNATAHKVAPGIVTIAEESTPWSGVTRPTNIGGLGFSMKWNMGWMHDTLDYVSRDPVYRSYHHHEMTFSMLYAFSENYVLPLSHDEVVHGKGTLWGRMPGNNHVKAAGLRSLLAYQWAHPGKQLLFMGQEFGQRAEWSEQRGLDWFQLDENGFSNGIQRLVRDINDIYRCHPALWSLDTTPEGYSWIDANDSANNVLSFMRYGSDGSVLACVFNFAGAEHRDYRLGLPRAGRWREVLNTDATIYHGSGIGNLGGVDATDDPWHGRPASAVLVLPPTSALWLTPA.

Asp-411 serves as the catalytic Nucleophile. Residue Glu-464 is the Proton donor of the active site.

Belongs to the glycosyl hydrolase 13 family. GlgB subfamily. Monomer.

It catalyses the reaction Transfers a segment of a (1-&gt;4)-alpha-D-glucan chain to a primary hydroxy group in a similar glucan chain.. It functions in the pathway glycan biosynthesis; glycogen biosynthesis. Catalyzes the formation of the alpha-1,6-glucosidic linkages in glycogen by scission of a 1,4-alpha-linked oligosaccharide from growing alpha-1,4-glucan chains and the subsequent attachment of the oligosaccharide to the alpha-1,6 position. This chain is 1,4-alpha-glucan branching enzyme GlgB, found in Mycobacterium tuberculosis (strain ATCC 25177 / H37Ra).